We begin with the raw amino-acid sequence, 406 residues long: Mitochondrial ribosome-associated GTPase 2 (406 aa).

The tract at residues 15–406 (FEGVGHWALS…LGQGRQPLRW (392 aa)) is localized in the mitochondria. Positions 30–406 (KPSRLLPQQA…LGQGRQPLRW (377 aa)) are not localized in the mitochondria. Residues 70 to 224 (RYFVDYRRVL…RVLHLELKTV (155 aa)) enclose the Obg domain. The 166-residue stretch at 225 to 390 (AHAGMVGFPN…LLLHLKVLYD (166 aa)) folds into the OBG-type G domain. Residues 231 to 238 (GFPNAGKS), 256 to 260 (FTTLK), 278 to 281 (DIPG), 345 to 348 (NKID), and 371 to 373 (SAL) each bind GTP. Mg(2+) contacts are provided by Ser-238 and Thr-258.

It belongs to the TRAFAC class OBG-HflX-like GTPase superfamily. OBG GTPase family. In terms of assembly, associates with the mitochondrial ribosome large subunit; the association occurs in a GTP-dependent manner. Requires Mg(2+) as cofactor.

It is found in the mitochondrion. The protein localises to the mitochondrion inner membrane. Plays a role in the regulation of the mitochondrial ribosome assembly and of translational activity. Displays GTPase activity. Involved in the ribosome maturation process. The chain is Mitochondrial ribosome-associated GTPase 2 (MTG2) from Pongo abelii (Sumatran orangutan).